A 237-amino-acid chain; its full sequence is Probable transcriptional regulatory protein Exig_1693 (237 aa).

Belongs to the TACO1 family. YeeN subfamily.

Its subcellular location is the cytoplasm. This Exiguobacterium sibiricum (strain DSM 17290 / CCUG 55495 / CIP 109462 / JCM 13490 / 255-15) protein is Probable transcriptional regulatory protein Exig_1693.